We begin with the raw amino-acid sequence, 140 residues long: Small ribosomal subunit protein uS12 (140 aa).

The residue at position 103 (aspartate 103) is a 3-methylthioaspartic acid. The tract at residues 120 to 140 (GVQKRMQARSKYGAKRPKKGK) is disordered. The segment covering 125 to 140 (MQARSKYGAKRPKKGK) has biased composition (basic residues).

It belongs to the universal ribosomal protein uS12 family. Part of the 30S ribosomal subunit. Contacts proteins S8 and S17. May interact with IF1 in the 30S initiation complex.

In terms of biological role, with S4 and S5 plays an important role in translational accuracy. Functionally, interacts with and stabilizes bases of the 16S rRNA that are involved in tRNA selection in the A site and with the mRNA backbone. Located at the interface of the 30S and 50S subunits, it traverses the body of the 30S subunit contacting proteins on the other side and probably holding the rRNA structure together. The combined cluster of proteins S8, S12 and S17 appears to hold together the shoulder and platform of the 30S subunit. The chain is Small ribosomal subunit protein uS12 from Desulfitobacterium hafniense (strain Y51).